We begin with the raw amino-acid sequence, 734 residues long: Sulfate transporter (734 aa).

Over residues 1–18 (MSLKNEDQNDLSPKDSVK) the composition is skewed to basic and acidic residues. The segment at 1–38 (MSLKNEDQNDLSPKDSVKGNDQYRAPSGIHLEPEEESR) is disordered. Phosphoserine is present on residues S12 and S16. 2 consecutive transmembrane segments (helical) span residues 113–133 (VMSG…YSLL) and 138–158 (PIYG…LGTS). N194 carries N-linked (GlcNAc...) asparagine glycosylation. 6 consecutive transmembrane segments (helical) span residues 214–234 (IIVG…MGFF), 237–257 (GFVS…GASF), 379–399 (VDAI…SEMF), 415–435 (AIGF…SAAL), 453–473 (VMTA…FFSL), and 519–539 (LIST…CVIL). Residues 563–714 (AYKNLQAKSG…YSIYEAMTFA (152 aa)) enclose the STAS domain.

The protein belongs to the SLC26A/SulP transporter (TC 2.A.53) family. N-glycosylated.

The protein resides in the cell membrane. It localises to the apical cell membrane. It carries out the reaction oxalate(in) + sulfate(out) = oxalate(out) + sulfate(in). The catalysed reaction is sulfate(out) + 2 chloride(in) = sulfate(in) + 2 chloride(out). The enzyme catalyses oxalate(out) + 2 chloride(in) = oxalate(in) + 2 chloride(out). It catalyses the reaction bromide(in) + chloride(out) = bromide(out) + chloride(in). It carries out the reaction nitrate(in) + chloride(out) = nitrate(out) + chloride(in). The catalysed reaction is iodide(in) + chloride(out) = iodide(out) + chloride(in). In terms of biological role, sulfate transporter which mediates sulfate uptake into chondrocytes in order to maintain adequate sulfation of proteoglycans which is needed for cartilage development. Mediates electroneutral anion exchange of sulfate ions for oxalate ions, sulfate and oxalate ions for chloride and/or hydroxyl ions and chloride ions for bromide, iodide and nitrate ions. The coupling of sulfate transport to both hydroxyl and chloride ions likely serves to ensure transport at both acidic pH when most sulfate uptake is mediated by sulfate-hydroxide exchange and alkaline pH when most sulfate uptake is mediated by sulfate-chloride exchange. Essential for chondrocyte proliferation, differentiation and cell size expansion. In Bos taurus (Bovine), this protein is Sulfate transporter (SLC26A2).